The following is a 402-amino-acid chain: Acetyl-CoA acetyltransferase (402 aa).

Cys90 serves as the catalytic Acyl-thioester intermediate. CoA is bound by residues Tyr185 and Lys230. Residue Tyr185 coordinates K(+). Residue Ala250 participates in K(+) binding. Ser251 serves as a coordination point for CoA. Val348 lines the K(+) pocket. Residues His352 and Cys382 each act as proton acceptor in the active site.

It belongs to the thiolase-like superfamily. Thiolase family. Homotetramer.

It is found in the cytoplasm. It localises to the cytosol. It catalyses the reaction 2 acetyl-CoA = acetoacetyl-CoA + CoA. It functions in the pathway metabolic intermediate biosynthesis; (R)-mevalonate biosynthesis; (R)-mevalonate from acetyl-CoA: step 1/3. Functionally, acetyl-CoA acetyltransferase; part of the first module of ergosterol biosynthesis pathway that includes the early steps of the pathway, conserved across all eukaryotes, and which results in the formation of mevalonate from acetyl-coenzyme A (acetyl-CoA). ERG10 catalyzes the formation of acetoacetyl-CoA from acetyl-CoA. The first module starts with the action of the cytosolic acetyl-CoA acetyltransferase ERG10 that catalyzes the formation of acetoacetyl-CoA. The hydroxymethylglutaryl-CoA synthase ERG13 then condenses acetyl-CoA with acetoacetyl-CoA to form HMG-CoA. The 3-hydroxy-3-methylglutaryl-coenzyme A (HMG-CoA) reductase HMG1 finally reduces HMG-CoA to produce mevalonate. The chain is Acetyl-CoA acetyltransferase from Candida albicans (strain SC5314 / ATCC MYA-2876) (Yeast).